The following is a 529-amino-acid chain: Peptide chain release factor 3 (529 aa).

Residues 11 to 280 enclose the tr-type G domain; the sequence is NKRRTFAIIS…GLTKWAPTPL (270 aa). GTP contacts are provided by residues 20 to 27, 88 to 92, and 142 to 145; these read SHPDAGKT, DTPGH, and NKCD.

Belongs to the TRAFAC class translation factor GTPase superfamily. Classic translation factor GTPase family. PrfC subfamily.

The protein resides in the cytoplasm. Its function is as follows. Increases the formation of ribosomal termination complexes and stimulates activities of RF-1 and RF-2. It binds guanine nucleotides and has strong preference for UGA stop codons. It may interact directly with the ribosome. The stimulation of RF-1 and RF-2 is significantly reduced by GTP and GDP, but not by GMP. The polypeptide is Peptide chain release factor 3 (Pseudoalteromonas translucida (strain TAC 125)).